The sequence spans 55 residues: MAKSGRDKIKLESTAGTGHFYTTTKNKRTTPEKMSIIKFDPKVRKHVEYKETKIK.

Basic and acidic residues predominate over residues 1 to 11; it reads MAKSGRDKIKL. The segment at 1–27 is disordered; that stretch reads MAKSGRDKIKLESTAGTGHFYTTTKNK. A compositionally biased stretch (polar residues) spans 14–24; sequence TAGTGHFYTTT.

The protein belongs to the bacterial ribosomal protein bL33 family.

This chain is Large ribosomal subunit protein bL33, found in Herminiimonas arsenicoxydans.